The following is a 62-amino-acid chain: Photosystem II reaction center protein Z (62 aa).

2 consecutive transmembrane segments (helical) span residues 8 to 28 (LVLL…VVLA) and 41 to 61 (YTGA…NSLV).

This sequence belongs to the PsbZ family. As to quaternary structure, PSII is composed of 1 copy each of membrane proteins PsbA, PsbB, PsbC, PsbD, PsbE, PsbF, PsbH, PsbI, PsbJ, PsbK, PsbL, PsbM, PsbT, PsbX, PsbY, PsbZ, Psb30/Ycf12, at least 3 peripheral proteins of the oxygen-evolving complex and a large number of cofactors. It forms dimeric complexes.

Its subcellular location is the plastid. It localises to the chloroplast thylakoid membrane. May control the interaction of photosystem II (PSII) cores with the light-harvesting antenna, regulates electron flow through the 2 photosystem reaction centers. PSII is a light-driven water plastoquinone oxidoreductase, using light energy to abstract electrons from H(2)O, generating a proton gradient subsequently used for ATP formation. The polypeptide is Photosystem II reaction center protein Z (Pyropia yezoensis (Susabi-nori)).